Here is a 66-residue protein sequence, read N- to C-terminus: Large ribosomal subunit protein bL33 (66 aa).

This sequence belongs to the bacterial ribosomal protein bL33 family.

The chain is Large ribosomal subunit protein bL33 from Wolbachia sp. subsp. Brugia malayi (strain TRS).